The sequence spans 317 residues: Acetyl-coenzyme A carboxylase carboxyl transferase subunit alpha (317 aa).

In terms of domain architecture, CoA carboxyltransferase C-terminal spans 31-292 (RFEPELAQLE…DKALWATLTS (262 aa)).

Belongs to the AccA family. Acetyl-CoA carboxylase is a heterohexamer composed of biotin carboxyl carrier protein (AccB), biotin carboxylase (AccC) and two subunits each of ACCase subunit alpha (AccA) and ACCase subunit beta (AccD).

Its subcellular location is the cytoplasm. It carries out the reaction N(6)-carboxybiotinyl-L-lysyl-[protein] + acetyl-CoA = N(6)-biotinyl-L-lysyl-[protein] + malonyl-CoA. It participates in lipid metabolism; malonyl-CoA biosynthesis; malonyl-CoA from acetyl-CoA: step 1/1. Its function is as follows. Component of the acetyl coenzyme A carboxylase (ACC) complex. First, biotin carboxylase catalyzes the carboxylation of biotin on its carrier protein (BCCP) and then the CO(2) group is transferred by the carboxyltransferase to acetyl-CoA to form malonyl-CoA. The chain is Acetyl-coenzyme A carboxylase carboxyl transferase subunit alpha from Sorangium cellulosum (strain So ce56) (Polyangium cellulosum (strain So ce56)).